The sequence spans 1657 residues: Androglobin (1657 aa).

The segment covering 1–11 has biased composition (basic residues); that stretch reads MASKQAKRKEV. Disordered regions lie at residues 1–40 and 321–398; these read MASK…SFEQ and TKEN…SSDV. Positions 70–402 constitute a Calpain catalytic domain; it reads KDKTAKSPIF…RPSSDVQYSM (333 aa). Over residues 321-386 the composition is skewed to basic and acidic residues; sequence TKENKDGKDG…DGEKEKEKFK (66 aa). The 128-residue stretch at 762–889 folds into the Globin; C-terminal part domain; sequence HVCSMTTFVI…EDVSLAEWVD (128 aa). The heme b site is built by glutamine 791 and histidine 823. In terms of domain architecture, IQ spans 905-934; the sequence is EIAAAVKIQSMWKGCYVRLLMKARKPETKE. A Globin; N-terminal part domain is found at 935-967; sequence NVTVADTLQKIWAVLEMNLEQYALSLLRLMFKS. Disordered stretches follow at residues 1184–1226, 1288–1356, 1422–1459, and 1638–1657; these read SKQV…TDTG, KHEE…QEDP, TTDT…ADIK, and IEKK…GKKK. The segment covering 1321-1336 has biased composition (basic and acidic residues); the sequence is EKSAEKEKLAKEKQAP. Polar residues-rich tracts occupy residues 1341–1351 and 1422–1443; these read QQVQMPTAVHS and TTDT…SQTK. A coiled-coil region spans residues 1585 to 1640; that stretch reads DEVLEMYGEMRDSVDEARQKILDIREVYRNKLLEAERLRMEALAAQEAAVKIEIEK.

In the central section; belongs to the globin family. It in the N-terminal section; belongs to the peptidase C2 family. In terms of assembly, interacts with septin SEPT10; contributes to in vitro proteolytic cleavage of SEPT10 in a calmodulin-dependent manner. Interacts with CFAP69. Interacts with SPEF2. May interact with calmodulin. In terms of tissue distribution, strongly expressed in testis and lung. Weakly expressed in heart, brain, spleen, kidney and tongue.

It is found in the cell projection. Its subcellular location is the cilium. It localises to the flagellum. Functionally, probable chimeric globin with a bis-histidyl six-coordinate heme-iron atom through which it could bind dioxygen, carbon monoxide and nitric oxide. Required for sperm flagellum formation and maturation of elongating spermatids, thus playing an essential role in male fertility. The chain is Androglobin from Mus musculus (Mouse).